Consider the following 107-residue polypeptide: Large ribosomal subunit protein uL24 (107 aa).

This sequence belongs to the universal ribosomal protein uL24 family. In terms of assembly, part of the 50S ribosomal subunit.

In terms of biological role, one of two assembly initiator proteins, it binds directly to the 5'-end of the 23S rRNA, where it nucleates assembly of the 50S subunit. Its function is as follows. One of the proteins that surrounds the polypeptide exit tunnel on the outside of the subunit. The protein is Large ribosomal subunit protein uL24 of Caldanaerobacter subterraneus subsp. tengcongensis (strain DSM 15242 / JCM 11007 / NBRC 100824 / MB4) (Thermoanaerobacter tengcongensis).